Reading from the N-terminus, the 459-residue chain is MLKIYNSITRQKQEFKPITPGKIGMYVCGVTIYDLCHIGHGRTFVSFDMIVRYLRYAGYEVNFQRNITDVDDKIIKRANENNESCEALTERLIGEMHQDFDALNMLRPDFEPRATLHIAEIIDMVELLLARGHAYVASDGDVLFSVASYPDYGRLSGQNLDQLQAGARVEVDETKQNPMDFVLWKMSKPGEPTWESPWGPGRPGWHIECSAMNSKHLGLHFDIHGGGSDLQFPHHENEIAQSCCAHDTPYVNYWMHTGMVMVDREKMSKSLGNFFTIRDVLGHYDAETVRYFLLSGHYRSQLNYSEDNLKQARSALERLYTAIKDVDLTVAAAPAEEFVAKFKAAMDDDFNTPEAYSVLFDMVREINRLKLTDMAQASALAVTLKQLADVLGLLSQEPEAFFQGGGSYDEVAEIEALIVERNRARTEKDWAAADVARNCLNELGVELEDGPSGTTWRKK.

Cys-28 lines the Zn(2+) pocket. A 'HIGH' region motif is present at residues 30 to 40 (VTIYDLCHIGH). Residues Cys-209, His-234, and Glu-238 each coordinate Zn(2+). Positions 266–270 (KMSKS) match the 'KMSKS' region motif. Residue Lys-269 participates in ATP binding.

This sequence belongs to the class-I aminoacyl-tRNA synthetase family. As to quaternary structure, monomer. Requires Zn(2+) as cofactor.

The protein localises to the cytoplasm. It carries out the reaction tRNA(Cys) + L-cysteine + ATP = L-cysteinyl-tRNA(Cys) + AMP + diphosphate. This chain is Cysteine--tRNA ligase, found in Shewanella baltica (strain OS155 / ATCC BAA-1091).